Reading from the N-terminus, the 342-residue chain is MNKIKVAIIFGGCSEEHDVSVKSAIEIAANINTEKFDPHYIGITKNGVWKLCKKPCTEWEADSLPAIFSPDRKTHGLLVMKEREYETRRIDVAFPVLHGKCGEDGAIQGLFELSGIPYVGCDIQSSAACMDKSLAYILTKNAGIAVPEFQMIEKGDKPEARTLTYPVFVKPARSGSSFGVTKVNSTEELNAAIEAAGQYDGKILIEQAISGCEVGCAVMGNEDDLIVGEVDQIRLSHGIFRIHQENEPEKGSENAMIIVPADIPVEERNRVQETAKKVYRVLGCRGLARVDLFLQEDGGIVLNEVNTLPGFTSYSRYPRMAAAAGITLPALIDSLITLAIER.

ATP contacts are provided by residues Lys132, 168-170, 176-177, 206-213, and Phe240; these read FVK, SS, and EQAISGCE. The region spanning 136–337 is the ATP-grasp domain; the sequence is YILTKNAGIA…LPALIDSLIT (202 aa). His243 is a binding site for substrate. 303–304 contributes to the ATP binding site; the sequence is NE. Residues Glu304 and Asn306 each coordinate Mg(2+).

The protein belongs to the D-alanine--D-alanine ligase family. Mg(2+) is required as a cofactor. It depends on Mn(2+) as a cofactor.

The protein localises to the cell membrane. The enzyme catalyses (R)-lactate + D-alanine + ATP = D-alanyl-(R)-lactate + ADP + phosphate. Required for high-level resistance to glycopeptides antibiotics. D-Ala--D-Ala ligase of altered specificity which catalyzes ester bond formation between D-Ala and various D-hydroxy acids; producing a peptidoglycan which does not terminate in D-alanine but in D-lactate, thus preventing vancomycin binding. In Enterococcus faecalis (strain ATCC 700802 / V583), this protein is Vancomycin B-type resistance protein VanB (vanB).